Consider the following 258-residue polypeptide: NAD kinase (258 aa).

The Proton acceptor role is filled by Asp51. Residues 51–52 (DG), Lys56, 119–120 (ND), Lys130, Asp149, 160–165 (TAYSLS), and Ala184 each bind NAD(+).

The protein belongs to the NAD kinase family. It depends on a divalent metal cation as a cofactor.

It is found in the cytoplasm. The catalysed reaction is NAD(+) + ATP = ADP + NADP(+) + H(+). In terms of biological role, involved in the regulation of the intracellular balance of NAD and NADP, and is a key enzyme in the biosynthesis of NADP. Catalyzes specifically the phosphorylation on 2'-hydroxyl of the adenosine moiety of NAD to yield NADP. In Thermotoga petrophila (strain ATCC BAA-488 / DSM 13995 / JCM 10881 / RKU-1), this protein is NAD kinase.